The sequence spans 500 residues: NAD(P)H-quinone oxidoreductase chain 4, chloroplastic (500 aa).

Helical transmembrane passes span 4–24 (FPWL…IFFL), 37–57 (ICIC…HFQL), 87–107 (IGPI…AWPV), 113–130 (LFHF…GLFS), 134–154 (LLLF…LLSM), 167–187 (FILY…GMGL), 211–231 (ILFY…IPLH), 242–262 (HYST…YGLV), 272–292 (AHSI…IYAA), 305–325 (IAYS…SITD), 330–350 (GAIL…FLAG), 386–406 (LALP…GIIT), 416–436 (ILIT…LLSM), and 462–482 (LFVS…PDFV).

This sequence belongs to the complex I subunit 4 family.

It localises to the plastid. The protein localises to the chloroplast thylakoid membrane. The catalysed reaction is a plastoquinone + NADH + (n+1) H(+)(in) = a plastoquinol + NAD(+) + n H(+)(out). The enzyme catalyses a plastoquinone + NADPH + (n+1) H(+)(in) = a plastoquinol + NADP(+) + n H(+)(out). The protein is NAD(P)H-quinone oxidoreductase chain 4, chloroplastic of Acorus calamus var. americanus (American sweet flag).